The following is a 185-amino-acid chain: Protein GrpE (185 aa).

The segment covering 1 to 11 (MENTQENPTDQ) has biased composition (polar residues). Positions 1–38 (MENTQENPTDQTTEETGREAQAAEPAAQAAENAAPAAE) are disordered. Residues 19–38 (EAQAAEPAAQAAENAAPAAE) show a composition bias toward low complexity.

This sequence belongs to the GrpE family. Homodimer.

It localises to the cytoplasm. Its function is as follows. Participates actively in the response to hyperosmotic and heat shock by preventing the aggregation of stress-denatured proteins, in association with DnaK and GrpE. It is the nucleotide exchange factor for DnaK and may function as a thermosensor. Unfolded proteins bind initially to DnaJ; upon interaction with the DnaJ-bound protein, DnaK hydrolyzes its bound ATP, resulting in the formation of a stable complex. GrpE releases ADP from DnaK; ATP binding to DnaK triggers the release of the substrate protein, thus completing the reaction cycle. Several rounds of ATP-dependent interactions between DnaJ, DnaK and GrpE are required for fully efficient folding. The protein is Protein GrpE of Burkholderia mallei (strain NCTC 10247).